We begin with the raw amino-acid sequence, 163 residues long: NADH-quinone oxidoreductase subunit I (163 aa).

4Fe-4S ferredoxin-type domains follow at residues 53–83 (LRRY…IEAG) and 94–123 (VRYD…EGPN). The [4Fe-4S] cluster site is built by C63, C66, C69, C73, C103, C106, C109, and C113.

The protein belongs to the complex I 23 kDa subunit family. NDH-1 is composed of 14 different subunits. Subunits NuoA, H, J, K, L, M, N constitute the membrane sector of the complex. [4Fe-4S] cluster serves as cofactor.

It localises to the cell inner membrane. It catalyses the reaction a quinone + NADH + 5 H(+)(in) = a quinol + NAD(+) + 4 H(+)(out). Its function is as follows. NDH-1 shuttles electrons from NADH, via FMN and iron-sulfur (Fe-S) centers, to quinones in the respiratory chain. The immediate electron acceptor for the enzyme in this species is believed to be ubiquinone. Couples the redox reaction to proton translocation (for every two electrons transferred, four hydrogen ions are translocated across the cytoplasmic membrane), and thus conserves the redox energy in a proton gradient. In Brucella abortus (strain S19), this protein is NADH-quinone oxidoreductase subunit I.